Here is a 366-residue protein sequence, read N- to C-terminus: Growth/differentiation factor 3 (366 aa).

The N-terminal stretch at 1 to 22 is a signal peptide; the sequence is MQPYQRLLALGFLLLTLPWGQT. A propeptide spanning residues 23-252 is cleaved from the precursor; the sequence is SEFQDSDLLQ…HCHPSSRKRR (230 aa). Asn113 and Asn308 each carry an N-linked (GlcNAc...) asparagine glycan. Disulfide bonds link Cys266/Cys331, Cys295/Cys363, and Cys299/Cys365.

The protein belongs to the TGF-beta family. As to quaternary structure, homodimer. Heterodimer (Potential). But, in contrast to other members of this family, cannot be disulfide-linked. Post-translationally, synthesized as large precursor molecule that undergo proteolytic cleavage, releasing the pro-domain from the active, receptor binding, C-terminal region of the molecule. In terms of tissue distribution, primarily in adult bone marrow, spleen, thymus and adipose tissue.

It localises to the secreted. It is found in the cytoplasm. Growth factor involved in early embryonic development and adipose-tissue homeostasis. During embryogenesis controls formation of anterior visceral endoderm and mesoderm and the establishment of anterior-posterior identity through a receptor complex comprising the receptor ACVR1B and the coreceptor CRIPTO. Regulates adipose-tissue homeostasis and energy balance under nutrient overload in part by signaling through the receptor complex based on ACVR1C and CRIPTO. In Mus musculus (Mouse), this protein is Growth/differentiation factor 3 (Gdf3).